A 313-amino-acid polypeptide reads, in one-letter code: Oxaloacetate tautomerase Fahd2a, mitochondrial (313 aa).

The N-terminal 84 residues, 1-84 (MLGSGRRRLL…TALSVARRAL (84 aa)), are a transit peptide targeting the mitochondrion. 3 residues coordinate Mg(2+): glutamate 159, glutamate 161, and aspartate 190. Position 202 is an N6-acetyllysine; alternate (lysine 202). Position 202 is an N6-succinyllysine; alternate (lysine 202). At lysine 233 the chain carries N6-acetyllysine.

The protein belongs to the FAH family. The cofactor is Mg(2+). Requires Mn(2+) as cofactor.

The protein localises to the mitochondrion. The enzyme catalyses oxaloacetate = enol-oxaloacetate. In terms of biological role, tautomerase that converts enol-oxaloacetate, a strong inhibitor of succinate dehydrogenase, to the physiological keto form of oxaloacetate. It is thereby required to maximize aerobic respiration efficiency by preventing succinate dehydrogenase inhibition. In Rattus norvegicus (Rat), this protein is Oxaloacetate tautomerase Fahd2a, mitochondrial.